A 386-amino-acid chain; its full sequence is Succinate--CoA ligase [ADP-forming] subunit beta (386 aa).

Residues Lys9–Arg244 form the ATP-grasp domain. Residues Lys46, Gly53 to Gly55, Glu99, Cys102, and Glu107 each bind ATP. Asn199 and Asp213 together coordinate Mg(2+). Substrate-binding positions include Asn264 and Gly321–Met323.

The protein belongs to the succinate/malate CoA ligase beta subunit family. Heterotetramer of two alpha and two beta subunits. The cofactor is Mg(2+).

The catalysed reaction is succinate + ATP + CoA = succinyl-CoA + ADP + phosphate. It catalyses the reaction GTP + succinate + CoA = succinyl-CoA + GDP + phosphate. Its pathway is carbohydrate metabolism; tricarboxylic acid cycle; succinate from succinyl-CoA (ligase route): step 1/1. In terms of biological role, succinyl-CoA synthetase functions in the citric acid cycle (TCA), coupling the hydrolysis of succinyl-CoA to the synthesis of either ATP or GTP and thus represents the only step of substrate-level phosphorylation in the TCA. The beta subunit provides nucleotide specificity of the enzyme and binds the substrate succinate, while the binding sites for coenzyme A and phosphate are found in the alpha subunit. In Rickettsia felis (strain ATCC VR-1525 / URRWXCal2) (Rickettsia azadi), this protein is Succinate--CoA ligase [ADP-forming] subunit beta.